The chain runs to 132 residues: Myelin P2 protein (132 aa).

At serine 2 the chain carries N-acetylserine. (9Z)-octadecenoate contacts are provided by residues arginine 107 and 127-129; that span reads RIY. Hexadecanoate is bound by residues arginine 107 and 127–129; that span reads RIY.

The protein belongs to the calycin superfamily. Fatty-acid binding protein (FABP) family. As to quaternary structure, monomer.

Its subcellular location is the cytoplasm. May play a role in lipid transport protein in Schwann cells. May bind cholesterol. The sequence is that of Myelin P2 protein (Pmp2) from Mus musculus (Mouse).